The following is a 315-amino-acid chain: Calumenin-A (315 aa).

An N-terminal signal peptide occupies residues Met1–Ser19. EF-hand domains are found at residues Glu68 to Lys103, Tyr104 to Asp139, His151 to Asp186, Met188 to Glu223, Trp229 to Asp264, and His265 to Ser300. Ca(2+) is bound by residues Asp81, Asp83, Asp85, Glu92, Asp117, Asn119, Asp121, Met123, and Glu128. N-linked (GlcNAc...) asparagine glycosylation occurs at Asn131. 18 residues coordinate Ca(2+): Asp164, Asn166, Asp168, Glu175, Asp201, Asn203, Asp205, Glu212, Asp242, Asn244, Asp246, Lys248, Glu253, Asp278, Asn280, Asp282, Lys284, and Glu289. The Prevents secretion from ER motif lies at His312–Phe315.

This sequence belongs to the CREC family. In terms of assembly, interacts with ggcx.

It localises to the endoplasmic reticulum membrane. Its subcellular location is the golgi apparatus. The protein resides in the secreted. The protein localises to the melanosome. It is found in the sarcoplasmic reticulum lumen. Functionally, involved in regulation of vitamin K-dependent carboxylation of multiple N-terminal glutamate residues. Seems to inhibit gamma-carboxylase ggcx. Binds 7 calcium ions with a low affinity. In Salmo salar (Atlantic salmon), this protein is Calumenin-A (calua).